Here is a 328-residue protein sequence, read N- to C-terminus: Malate dehydrogenase (328 aa).

13–19 (GGTGQIA) serves as a coordination point for NAD(+). Residues Arg94 and Arg100 each contribute to the substrate site. Residues Asn107, Gln114, and 131–133 (VGN) each bind NAD(+). Residues Asn133 and Arg164 each contribute to the substrate site. His189 (proton acceptor) is an active-site residue.

Belongs to the LDH/MDH superfamily. MDH type 2 family.

It catalyses the reaction (S)-malate + NAD(+) = oxaloacetate + NADH + H(+). Its function is as follows. Catalyzes the reversible oxidation of malate to oxaloacetate. This Chlamydia felis (strain Fe/C-56) (Chlamydophila felis) protein is Malate dehydrogenase.